The primary structure comprises 422 residues: Synaptotagmin-2 (422 aa).

A disordered region spans residues 1-43; sequence MRNIFKRNQEPNVAPATTTATMPLAPVAPADNSTESTGPGESQ. The Vesicular portion of the chain corresponds to 1-60; that stretch reads MRNIFKRNQEPNVAPATTTATMPLAPVAPADNSTESTGPGESQEDMFAKLKEKFFNEINK. Positions 14–30 are enriched in low complexity; it reads APATTTATMPLAPVAPA. Residues 31–40 are compositionally biased toward polar residues; that stretch reads DNSTESTGPG. N-linked (GlcNAc...) asparagine glycosylation is present at N32. Residues 61 to 87 form a helical membrane-spanning segment; sequence IPLPPWALIAMAVVAGLLLLTCCFCIC. The Cytoplasmic portion of the chain corresponds to 88–422; that stretch reads KKCCCKKKKN…EVDALLGKNK (335 aa). The segment at 102-141 is disordered; sequence GKGMKNAMNMKDMKGGQDDDDAETGLTEGEGEGEEEKEPE. Residues 119 to 139 are compositionally biased toward acidic residues; sequence DDDDAETGLTEGEGEGEEEKE. Phosphothreonine is present on residues T125 and T128. Residues 136-382 are phospholipid binding; that stretch reads EEKEPENLGK…AIGKIFVGSN (247 aa). 2 C2 domains span residues 142 to 261 and 273 to 406; these read NLGK…EEWR and KLGD…AQWH. Residues L172, D173, and D179 each coordinate Ca(2+). T202 is subject to Phosphothreonine. Y230 bears the Phosphotyrosine mark. Ca(2+) is bound by residues D231, F232, D233, S236, K237, D239, D304, D310, D364, and D366. T386 carries the phosphothreonine modification.

It belongs to the synaptotagmin family. As to quaternary structure, homotetramer. Heterodimer; heterodimerizes with SYT1 in presence of calcium. Interacts with SCAMP5. Interacts with STON2. Interacts with PRRT2. (Microbial infection) Interacts with C.botulinum neurotoxin type B (BoNT/B, botB). In terms of assembly, (Microbial infection) Interacts with C.botulinum neurotoxin type G (BoNT/G, botG). The cofactor is Ca(2+). Post-translationally, phosphorylation at Thr-202 by WNK1, changes the calcium requirement for SYT2-binding to phospholipid membranes.

The protein resides in the cytoplasmic vesicle. It is found in the secretory vesicle. The protein localises to the synaptic vesicle membrane. It localises to the chromaffin granule membrane. Its subcellular location is the cytoplasm. In terms of biological role, exhibits calcium-dependent phospholipid and inositol polyphosphate binding properties. May have a regulatory role in the membrane interactions during trafficking of synaptic vesicles at the active zone of the synapse. Plays a role in dendrite formation by melanocytes. (Microbial infection) Receptor for C.botulinum neurotoxin type B (BoNT/B, botB); interaction is improved in the presence of gangliosides. The toxin binds via the vesicular domain (residues 47-60). Functionally, (Microbial infection) Receptor for C.botulinum neurotoxin type G (BoNT/G, botG); gangliosides are not required for (or only very slightly improve) binding to a membrane-anchored receptor fragment. The toxin binds via the vesicular domain (residues 47-55). The protein is Synaptotagmin-2 of Mus musculus (Mouse).